The sequence spans 95 residues: Small ribosomal subunit protein bS18 (95 aa).

It belongs to the bacterial ribosomal protein bS18 family. Part of the 30S ribosomal subunit. Forms a tight heterodimer with protein bS6.

Its function is as follows. Binds as a heterodimer with protein bS6 to the central domain of the 16S rRNA, where it helps stabilize the platform of the 30S subunit. In Acidiphilium cryptum (strain JF-5), this protein is Small ribosomal subunit protein bS18.